The following is a 118-amino-acid chain: Holo-[acyl-carrier-protein] synthase (118 aa).

2 residues coordinate Mg(2+): Asp8 and Glu58.

This sequence belongs to the P-Pant transferase superfamily. AcpS family. Requires Mg(2+) as cofactor.

Its subcellular location is the cytoplasm. It carries out the reaction apo-[ACP] + CoA = holo-[ACP] + adenosine 3',5'-bisphosphate + H(+). Its function is as follows. Transfers the 4'-phosphopantetheine moiety from coenzyme A to a Ser of acyl-carrier-protein. The sequence is that of Holo-[acyl-carrier-protein] synthase from Streptococcus equi subsp. zooepidemicus (strain H70).